Reading from the N-terminus, the 532-residue chain is Telomerase Cajal body protein 1 (532 aa).

The disordered stretch occupies residues 1 to 53 (MKTSEERLLAPDSLPPDLAPAPVPQGSPAEKNTDFEPVPPPCGGDDQPQLATD). Pro residues predominate over residues 13–25 (SLPPDLAPAPVPQ). Residues Ser-27, Ser-61, and Ser-83 each carry the phosphoserine modification. Residues 80 to 122 (SELSPGIEEQDVSEHASLPGEETNLPELESGEATEGVSEERAE) are disordered. 6 WD repeats span residues 151 to 190 (RSEN…YSEQ), 206 to 251 (EGDT…LRAS), 256 to 297 (NHLD…RDCE), 307 to 348 (GQSG…ALLG), 349 to 389 (GHQG…HLLW), and 395 to 434 (VTTN…SDDS). At Thr-474 the chain carries Phosphothreonine. Ser-476 is modified (phosphoserine). The interval 510-532 (DPSSPVDDQDEKGQRRTEAVGMS) is disordered. Basic and acidic residues predominate over residues 520–532 (EKGQRRTEAVGMS).

Belongs to the TCAB1 family. In terms of assembly, component of the telomerase holoenzyme complex composed of one molecule of TERT, one molecule of WRAP53/TCAB1, two molecules of H/ACA ribonucleoprotein complex subunits DKC1, NOP10, NHP2 and GAR1, and a telomerase RNA template component (TERC). The telomerase holoenzyme complex is associated with TEP1, SMG6/EST1A and POT1. Interacts with the chaperonin-containing T-complex (TRiC) complex; which mediates the folding of WRAP53/TCAB1. Interacts with COIL. Interacts with SMN1. Interacts with RNF8. Interacts with histone H2AX. Post-translationally, phosphorylated at Ser-61 by ATM in response to DNA damage, promoting its interaction with histone H2AX and localization to sites of DNA double-strand breaks.

The protein resides in the nucleus. Its subcellular location is the cajal body. It localises to the chromosome. The protein localises to the telomere. RNA chaperone that plays a key role in telomere maintenance and RNA localization to Cajal bodies. Specifically recognizes and binds the Cajal body box (CAB box) present in both small Cajal body RNAs (scaRNAs) and telomerase RNA template component (TERC). Essential component of the telomerase holoenzyme complex, a ribonucleoprotein complex essential for the replication of chromosome termini that elongates telomeres in most eukaryotes. In the telomerase holoenzyme complex, required to stimulate the catalytic activity of the complex. Acts by specifically binding the CAB box of the TERC RNA and controlling the folding of the CR4/CR5 region of the TERC RNA, a critical step for telomerase activity. In addition, also controls telomerase holoenzyme complex localization to Cajal body. During S phase, required for delivery of TERC to telomeres during S phase and for telomerase activity. In addition to its role in telomere maintenance, also required for Cajal body formation, probably by mediating localization of scaRNAs to Cajal bodies. Also plays a role in DNA repair: phosphorylated by ATM in response to DNA damage and relocalizes to sites of DNA double-strand breaks to promote the repair of DNA double-strand breaks. Acts by recruiting the ubiquitin ligase RNF8 to DNA breaks and promote both homologous recombination (HR) and non-homologous end joining (NHEJ). In Mus musculus (Mouse), this protein is Telomerase Cajal body protein 1.